The primary structure comprises 460 residues: Cell death abnormality protein 8 (460 aa).

Residues 1 to 45 (MYLKKHESKLLLIPKNEDKEDAGIIAVLTDRVPSVLIVRWFDLFC) lie on the Cytoplasmic side of the membrane. A helical transmembrane segment spans residues 46 to 66 (FGFAMCSYVLDFFSDIGIAIF). Over 67–77 (HFWAGRHLSGA) the chain is Extracellular. Residues 78–98 (LVLTFALIPSVIINIISMVWM) traverse the membrane as a helical segment. Residues 99-123 (LDDEMHWKRRAHPRRTGTFELNQKR) are Cytoplasmic-facing. Residues 124–144 (FISLGKMITLCIFQMGPLFWY) traverse the membrane as a helical segment. Residues 145-219 (YKALYYGWMF…YYISGKYPYW (75 aa)) are Extracellular-facing. A helical transmembrane segment spans residues 220–240 (LYFQAASLTLSIISISWSVVV). Topologically, residues 241 to 274 (QNRSLRMTRDDKVNIWPHEAVLQFCWRFLTILAR) are cytoplasmic. Residues 275-295 (IITLVAFVLLFGIYVVFLIFG) form a helical membrane-spanning segment. At 296-320 (HLIVTLVHVIFLQALHIEACTHIEK) the chain is on the extracellular side. Residues 321 to 341 (LLLLINAMIHLFTPFNMAEGN) form a helical membrane-spanning segment. Over 342 to 353 (TRYRYLVAYTVE) the chain is Cytoplasmic. The helical transmembrane segment at 354–374 (FIEMMIIFLLLPTPLDAFPLI) threads the bilayer. Residues 375-378 (EKIR) lie on the Extracellular side of the membrane. Residues 379-399 (IGVPATFFIGIFIMLIYYKFF) form a helical membrane-spanning segment. Over 400–460 (HPNRRQDLEA…SLLEEDECHN (61 aa)) the chain is Cytoplasmic.

Belongs to the XK family. Post-translationally, cleavage by ced-3 activates ced-8 function in promoting phosphatidylserine exposure at the surface of apoptotic cells.

Its subcellular location is the cell membrane. Acts downstream of ced-9 and caspase ced-3 to promote phosphatidylserine exposure on apoptotic cell surface, possibly by mediating phospholipid scrambling. Phosphatidylserine is a specific marker only present at the surface of apoptotic cells and acts as a specific signal for engulfment. Regulates apoptosis kinetics during embryonic development. Not required for engulfment of germ cell corpses. The polypeptide is Cell death abnormality protein 8 (Caenorhabditis briggsae).